A 319-amino-acid chain; its full sequence is NADH-quinone oxidoreductase subunit H 1 (319 aa).

A run of 8 helical transmembrane segments spans residues Leu-8 to Ile-28, Leu-74 to Ile-94, Ile-107 to Gly-127, Leu-147 to Phe-167, Met-179 to Glu-199, Phe-230 to Phe-250, Leu-258 to Leu-278, and Leu-297 to Asp-317.

The protein belongs to the complex I subunit 1 family. In terms of assembly, NDH-1 is composed of 14 different subunits. Subunits NuoA, H, J, K, L, M, N constitute the membrane sector of the complex.

Its subcellular location is the cell inner membrane. The catalysed reaction is a quinone + NADH + 5 H(+)(in) = a quinol + NAD(+) + 4 H(+)(out). In terms of biological role, NDH-1 shuttles electrons from NADH, via FMN and iron-sulfur (Fe-S) centers, to quinones in the respiratory chain. The immediate electron acceptor for the enzyme in this species is believed to be ubiquinone. Couples the redox reaction to proton translocation (for every two electrons transferred, four hydrogen ions are translocated across the cytoplasmic membrane), and thus conserves the redox energy in a proton gradient. This subunit may bind ubiquinone. This chain is NADH-quinone oxidoreductase subunit H 1, found in Nitrosococcus oceani (strain ATCC 19707 / BCRC 17464 / JCM 30415 / NCIMB 11848 / C-107).